Reading from the N-terminus, the 549-residue chain is Cation/acetate symporter ActP (549 aa).

13 consecutive transmembrane segments (helical) span residues 33-53, 77-97, 103-123, 148-168, 183-203, 206-226, 262-282, 303-323, 355-375, 404-424, 428-448, 464-484, and 493-513; these read WQAI…TYWA, LAIA…ALVF, GLIY…LIAE, ILSA…QMVG, IAVV…GMLA, WVQI…AFMV, ISAL…PHIL, GFMG…IMLV, LFLG…VAGL, VSKI…VLFE, IAFM…PIIL, GGWL…TIWV, and IFPY…GIWF.

This sequence belongs to the sodium:solute symporter (SSF) (TC 2.A.21) family.

It is found in the cell inner membrane. Its function is as follows. Transports acetate. This Citrobacter koseri (strain ATCC BAA-895 / CDC 4225-83 / SGSC4696) protein is Cation/acetate symporter ActP.